The primary structure comprises 359 residues: PFDAPGVIKGQGTIGTEINRQLKDIHAVFVPVGGGGLISGVAAYFTQVAPHTKIIGVEPYGAASMTLSLYEGHRVKLENVDTFADGVAVALVGEYTFAKCQELIDGMVLVRNDGISAAIKDVYDEGRNILETSGAVAIAGAAAYCEFYNIKNENIVAIASGANMDFSKLHKVTELAELGSDNEALLATFMIEQPGSFKTFAKLVGSMNITEVTYRFTSERKEALVLYRVDVDEKSDLEEMIKKLNSSNMKTFNFSHNELVAEHIKHLVGGSASISDEIFGEFIFPEKAGTLSTFLEAFSPRWNITLCRYRDQGDINGNVLVGFQVPQSEMDEFKSQADGLGYPYELDNSNEAFNIVVAE.

2 consecutive ACT-like domains span residues 184–256 (ALLA…NFSH) and 278–349 (IFGE…LDNS).

This sequence belongs to the serine/threonine dehydratase family. In terms of assembly, homotetramer. It depends on pyridoxal 5'-phosphate as a cofactor. Floral buds of untreated plants. After ABA treatment or mechanical wounding is mostly accumulated in leaves, to a lesser extent in stems, but not in roots. Expressed in anthers, carpel leaves, pith cells, sepals and petals. Not expressed in stomium, vascular bundles, epidermal cells or pollen mother cells.

It is found in the plastid. Its subcellular location is the chloroplast. It carries out the reaction L-threonine = 2-oxobutanoate + NH4(+). It participates in amino-acid biosynthesis; L-isoleucine biosynthesis; 2-oxobutanoate from L-threonine: step 1/1. In Solanum tuberosum (Potato), this protein is Threonine dehydratase biosynthetic, chloroplastic.